A 279-amino-acid chain; its full sequence is Ribosomal RNA small subunit methyltransferase A (279 aa).

S-adenosyl-L-methionine is bound by residues Asn-27, Leu-29, Gly-54, Glu-76, Asp-102, and Asn-127.

This sequence belongs to the class I-like SAM-binding methyltransferase superfamily. rRNA adenine N(6)-methyltransferase family. RsmA subfamily.

It is found in the cytoplasm. It catalyses the reaction adenosine(1518)/adenosine(1519) in 16S rRNA + 4 S-adenosyl-L-methionine = N(6)-dimethyladenosine(1518)/N(6)-dimethyladenosine(1519) in 16S rRNA + 4 S-adenosyl-L-homocysteine + 4 H(+). Functionally, specifically dimethylates two adjacent adenosines (A1518 and A1519) in the loop of a conserved hairpin near the 3'-end of 16S rRNA in the 30S particle. May play a critical role in biogenesis of 30S subunits. In Mesorhizobium japonicum (strain LMG 29417 / CECT 9101 / MAFF 303099) (Mesorhizobium loti (strain MAFF 303099)), this protein is Ribosomal RNA small subunit methyltransferase A.